Here is a 458-residue protein sequence, read N- to C-terminus: tRNA modification GTPase MnmE (458 aa).

The (6S)-5-formyl-5,6,7,8-tetrahydrofolate site is built by Arg-22, Glu-84, and Arg-123. Residues 220-379 (GIATAIIGRP…LEKAIADLFF (160 aa)) form the TrmE-type G domain. A K(+)-binding site is contributed by Asn-230. GTP is bound by residues 230–235 (NVGKSS), 249–255 (TDIAGTT), and 274–277 (DTAG). Ser-234 serves as a coordination point for Mg(2+). K(+) is bound by residues Thr-249, Ile-251, and Thr-254. Position 255 (Thr-255) interacts with Mg(2+). Lys-458 contacts (6S)-5-formyl-5,6,7,8-tetrahydrofolate.

It belongs to the TRAFAC class TrmE-Era-EngA-EngB-Septin-like GTPase superfamily. TrmE GTPase family. Homodimer. Heterotetramer of two MnmE and two MnmG subunits. K(+) is required as a cofactor.

It localises to the cytoplasm. In terms of biological role, exhibits a very high intrinsic GTPase hydrolysis rate. Involved in the addition of a carboxymethylaminomethyl (cmnm) group at the wobble position (U34) of certain tRNAs, forming tRNA-cmnm(5)s(2)U34. This is tRNA modification GTPase MnmE from Bacillus cytotoxicus (strain DSM 22905 / CIP 110041 / 391-98 / NVH 391-98).